A 438-amino-acid chain; its full sequence is Argininosuccinate lyase (438 aa).

It belongs to the lyase 1 family. Argininosuccinate lyase subfamily.

It localises to the cytoplasm. It catalyses the reaction 2-(N(omega)-L-arginino)succinate = fumarate + L-arginine. The protein operates within amino-acid biosynthesis; L-arginine biosynthesis; L-arginine from L-ornithine and carbamoyl phosphate: step 3/3. The protein is Argininosuccinate lyase of Clostridium tetani (strain Massachusetts / E88).